The sequence spans 891 residues: Alanine--tRNA ligase (891 aa).

Positions 576, 580, 684, and 688 each coordinate Zn(2+).

This sequence belongs to the class-II aminoacyl-tRNA synthetase family. Zn(2+) is required as a cofactor.

The protein localises to the cytoplasm. The catalysed reaction is tRNA(Ala) + L-alanine + ATP = L-alanyl-tRNA(Ala) + AMP + diphosphate. In terms of biological role, catalyzes the attachment of alanine to tRNA(Ala) in a two-step reaction: alanine is first activated by ATP to form Ala-AMP and then transferred to the acceptor end of tRNA(Ala). Also edits incorrectly charged Ser-tRNA(Ala) and Gly-tRNA(Ala) via its editing domain. This Orientia tsutsugamushi (strain Boryong) (Rickettsia tsutsugamushi) protein is Alanine--tRNA ligase.